The primary structure comprises 311 residues: Malate dehydrogenase (311 aa).

Residues 7–13 and aspartate 34 each bind NAD(+); that span reads GAAGGIG. Residues arginine 81 and arginine 87 each contribute to the substrate site. NAD(+) contacts are provided by residues asparagine 94 and 117–119; that span reads ITN. Residues asparagine 119 and arginine 153 each contribute to the substrate site. Histidine 177 acts as the Proton acceptor in catalysis. Residue methionine 227 coordinates NAD(+).

The protein belongs to the LDH/MDH superfamily. MDH type 1 family. As to quaternary structure, homodimer.

The enzyme catalyses (S)-malate + NAD(+) = oxaloacetate + NADH + H(+). Its function is as follows. Catalyzes the reversible oxidation of malate to oxaloacetate. This is Malate dehydrogenase from Yersinia enterocolitica serotype O:8 / biotype 1B (strain NCTC 13174 / 8081).